We begin with the raw amino-acid sequence, 386 residues long: Histidinol-phosphate aminotransferase (386 aa).

A compositionally biased stretch (polar residues) spans 1–11 (MMVRKSTASNR). Residues 1 to 22 (MMVRKSTASNRRLQDKGDEEPV) form a disordered region. At Lys-248 the chain carries N6-(pyridoxal phosphate)lysine.

The protein belongs to the class-II pyridoxal-phosphate-dependent aminotransferase family. Histidinol-phosphate aminotransferase subfamily. In terms of assembly, homodimer. The cofactor is pyridoxal 5'-phosphate.

The enzyme catalyses L-histidinol phosphate + 2-oxoglutarate = 3-(imidazol-4-yl)-2-oxopropyl phosphate + L-glutamate. Its pathway is amino-acid biosynthesis; L-histidine biosynthesis; L-histidine from 5-phospho-alpha-D-ribose 1-diphosphate: step 7/9. The polypeptide is Histidinol-phosphate aminotransferase (Moorella thermoacetica (strain ATCC 39073 / JCM 9320)).